A 175-amino-acid polypeptide reads, in one-letter code: Protein OPG036 (175 aa).

The protein belongs to the poxviridae OPG036 family.

The protein resides in the host nucleus. Plays a role in the inhibition of host innate immune response. Within the host nucleus, inhibits activation of interferon-beta promoter by inhibiting IRF3 activation. The polypeptide is Protein OPG036 (OPG036) (Bos taurus (Bovine)).